The chain runs to 338 residues: Inositol 2-dehydrogenase (338 aa).

It belongs to the Gfo/Idh/MocA family. In terms of assembly, homotetramer.

The catalysed reaction is myo-inositol + NAD(+) = scyllo-inosose + NADH + H(+). Functionally, involved in the oxidation of myo-inositol (MI) to 2-keto-myo-inositol (2KMI or 2-inosose). The chain is Inositol 2-dehydrogenase from Azotobacter vinelandii (strain DJ / ATCC BAA-1303).